Here is a 329-residue protein sequence, read N- to C-terminus: Serpentine receptor class alpha-7 (329 aa).

The next 7 membrane-spanning stretches (helical) occupy residues Y25–V45, I57–A77, Y104–L124, V143–I163, R187–L207, T237–F257, and F273–V293.

This sequence belongs to the nematode receptor-like protein sra family.

The protein localises to the membrane. This chain is Serpentine receptor class alpha-7 (sra-7), found in Caenorhabditis elegans.